A 458-amino-acid chain; its full sequence is Argininosuccinate lyase (458 aa).

It belongs to the lyase 1 family. Argininosuccinate lyase subfamily.

The protein resides in the cytoplasm. The catalysed reaction is 2-(N(omega)-L-arginino)succinate = fumarate + L-arginine. It functions in the pathway amino-acid biosynthesis; L-arginine biosynthesis; L-arginine from L-ornithine and carbamoyl phosphate: step 3/3. The polypeptide is Argininosuccinate lyase (Trichlorobacter lovleyi (strain ATCC BAA-1151 / DSM 17278 / SZ) (Geobacter lovleyi)).